The primary structure comprises 508 residues: Inosine-5'-monophosphate dehydrogenase (508 aa).

CBS domains follow at residues 111-170 (FITD…EITL) and 174-230 (MTTN…PDAS). NAD(+) contacts are provided by residues D267 and 317-319 (GMG). Residues G319 and G321 each coordinate K(+). S322 lines the IMP pocket. C324 contacts K(+). The Thioimidate intermediate role is filled by C324. Residues 357–359 (DGG), 380–381 (GF), and 404–408 (YRGMA) each bind IMP. Catalysis depends on R420, which acts as the Proton acceptor. Position 432 (Q432) interacts with IMP. G492 contacts K(+).

This sequence belongs to the IMPDH/GMPR family. As to quaternary structure, homotetramer. K(+) is required as a cofactor.

It catalyses the reaction IMP + NAD(+) + H2O = XMP + NADH + H(+). The protein operates within purine metabolism; XMP biosynthesis via de novo pathway; XMP from IMP: step 1/1. Its activity is regulated as follows. Mycophenolic acid (MPA) is a non-competitive inhibitor that prevents formation of the closed enzyme conformation by binding to the same site as the amobile flap. In contrast, mizoribine monophosphate (MZP) is a competitive inhibitor that induces the closed conformation. MPA is a potent inhibitor of mammalian IMPDHs but a poor inhibitor of the bacterial enzymes. MZP is a more potent inhibitor of bacterial IMPDH. Catalyzes the conversion of inosine 5'-phosphate (IMP) to xanthosine 5'-phosphate (XMP), the first committed and rate-limiting step in the de novo synthesis of guanine nucleotides, and therefore plays an important role in the regulation of cell growth. This chain is Inosine-5'-monophosphate dehydrogenase, found in Leptospira interrogans serogroup Icterohaemorrhagiae serovar Lai (strain 56601).